A 58-amino-acid polypeptide reads, in one-letter code: Light-harvesting protein B-870 alpha chain (58 aa).

Residues 1–15 (MSKFYKIWLVFDPRR) are Cytoplasmic-facing. The chain crosses the membrane as a helical span at residues 16 to 36 (VFVAQGVFLFLLAVLIHLILL). Position 32 (His32) interacts with a bacteriochlorophyll. At 37 to 58 (STPAFNWLTVATAKHGYVAAAQ) the chain is on the periplasmic side.

Belongs to the antenna complex alpha subunit family. In terms of assembly, the core complex is formed by different alpha and beta chains, binding bacteriochlorophyll molecules, and arranged most probably in tetrameric structures disposed around the reaction center. The non-pigmented gamma chains may constitute additional components.

The protein resides in the cell inner membrane. Its function is as follows. Antenna complexes are light-harvesting systems, which transfer the excitation energy to the reaction centers. The sequence is that of Light-harvesting protein B-870 alpha chain (pufA) from Rhodobacter capsulatus (Rhodopseudomonas capsulata).